The sequence spans 886 residues: Protein translocase subunit SecA (886 aa).

ATP contacts are provided by residues Gln85, 103 to 107 (GEGKT), and Asp492. Residues 841 to 864 (RVVENRYAEEGPKQPARRENKVGR) are compositionally biased toward basic and acidic residues. Residues 841–866 (RVVENRYAEEGPKQPARRENKVGRND) are disordered. Positions 868, 870, 879, and 880 each coordinate Zn(2+).

This sequence belongs to the SecA family. In terms of assembly, monomer and homodimer. Part of the essential Sec protein translocation apparatus which comprises SecA, SecYEG and auxiliary proteins SecDF. Other proteins may also be involved. Requires Zn(2+) as cofactor.

It localises to the cell membrane. It is found in the cytoplasm. It carries out the reaction ATP + H2O + cellular proteinSide 1 = ADP + phosphate + cellular proteinSide 2.. In terms of biological role, part of the Sec protein translocase complex. Interacts with the SecYEG preprotein conducting channel. Has a central role in coupling the hydrolysis of ATP to the transfer of proteins into and across the cell membrane, serving as an ATP-driven molecular motor driving the stepwise translocation of polypeptide chains across the membrane. This Pelotomaculum thermopropionicum (strain DSM 13744 / JCM 10971 / SI) protein is Protein translocase subunit SecA.